The primary structure comprises 227 residues: Urease accessory protein UreF (227 aa).

The protein belongs to the UreF family. In terms of assembly, ureD, UreF and UreG form a complex that acts as a GTP-hydrolysis-dependent molecular chaperone, activating the urease apoprotein by helping to assemble the nickel containing metallocenter of UreC. The UreE protein probably delivers the nickel.

The protein resides in the cytoplasm. Functionally, required for maturation of urease via the functional incorporation of the urease nickel metallocenter. This Actinobacillus pleuropneumoniae (Haemophilus pleuropneumoniae) protein is Urease accessory protein UreF.